Consider the following 738-residue polypeptide: MDKRVRGSWALGGQSEVDLDYHKILTAGLSVQQGIVRQRVIPVYVVSDLEGICQHIIQAFEAGVDFQDNADSFLLLLCLHHAYQGDHRLFLKSDAVQYLEGHGFRFEVREKENVHRLDELLPNVTGGKNLRRTLAAMPEEETTEANAGQFLSFASLFLPKLVVGEKACLEKVQRQIQVHAEQGLIQYPTSWQSVGHMMVIFRLMRTNFLIKFLLIHQGMHMVAGHDANDTVISNSVAQARFSGLLIVKTVLDHILQKTDLGVRLHPLARTAKVKNEVSSFKAALGSLAKHGEYAPFARLLNLSGVNNLEHGLYPQLSAIALGVATAHGSTLAGVNVGEQYQQLREAATEAEKQLQQYAETRELDNLGLDEQEKKILMSFHQKKNEISFQQTNAMVTLRKERLAKLTEAITTASKIKVGDRYPDDNDIPFPGPIYDETHPNPSDDNPDDSRDTTIPGGVVDPYDDESNNYPDYEDSAEGTTGDLDLFNLDDDDDDSQPGPPDRGQSKERAARTHGLQDPTLDGAKKVPELTPGSHQPGNLHITKPGSNTNQPQGNMSSTLQSMTPIQEESEPDDQKDDDDESLTSLDSEGDEDVESVSGENNPTVAPPAPVYKDTGVDTNQQNGPSNAVDGQGSESEALPINPEKGSALEETYYHLLKTQGPFEAINYYHLMSDEPIAFSTESGKEYIFPDSLEEAYPPWLSEKEALEKENRYLVIDGQQFLWPVMSLQDKFLAVLQHD.

Positions 334 to 363 (VNVGEQYQQLREAATEAEKQLQQYAETREL) form a coiled coil. A disordered region spans residues 418–640 (GDRYPDDNDI…QGSESEALPI (223 aa)). The segment covering 461–476 (PYDDESNNYPDYEDSA) has biased composition (acidic residues). Residues 544-564 (PGSNTNQPQGNMSSTLQSMTP) show a composition bias toward polar residues. Acidic residues predominate over residues 567–594 (EESEPDDQKDDDDESLTSLDSEGDEDVE). Polar residues predominate over residues 616–625 (VDTNQQNGPS).

Belongs to the filoviruses nucleoprotein family. Homooligomer. Homomultimerizes to form the nucleocapsid. Binds to viral genomic RNA. Interacts with VP35 and VP30 to form the nucleocapsid. Interacts with host PPP2R5C; this interaction leads to VP30 dephosphorylation and viral transcription. Interacts with VP24; this interaction facilitates nucleocapsid assembly and genome packaging. Interacts with matrix protein VP40; this interaction allows recruitment of the nucleocapsid into progeny virions. Interacts with host STAU1. Interacts with host NXF1 (via RNA-binding domain); this interaction recruits NXF1 to the inclusion bodies were viral replication takes place, probably to export viral mRNA-NXF1 complexes from these sites. Interacts with host CCDC92; this interaction sequesters NP in the host cytoplasm. Interacts with host TRIM14. Phosphorylated and O-glycosylated by host. Acetylated by host EP300 in vitro.

Its subcellular location is the virion. It is found in the host cytoplasm. Its function is as follows. Oligomerizes into helical capsid to encapsidate the viral genome, protecting it from nucleases and the cellular innate immune response. VP35 binds to and stabilizes monomeric NP, keeping it soluble. Upon virus replication, NP is recruited to bind cooperatively viral genomic RNA and VP35 is released. The encapsidated genomic RNA is termed the nucleocapsid and serves as template for transcription and replication. The nucleocapsid is helical with a pitch of 10.81 NP per turn and a diameter of about 22nm. Each NP binds to six nucleotides of viral genomic RNA, three being exposed to the solvant and three hidden into the nucleocapsid. Also recruits host PPP2R5C phosphatase to dephosphorylate VP30 and thereby promote viral transcription. Upon virion assembly and budding, NP binds to VP24 and possibly host STAU1. The polypeptide is Nucleoprotein (NP) (Sudan ebolavirus (strain Human/Uganda/Gulu/2000) (SEBOV)).